The chain runs to 156 residues: Transcription antitermination protein NusB (156 aa).

The protein belongs to the NusB family.

Functionally, involved in transcription antitermination. Required for transcription of ribosomal RNA (rRNA) genes. Binds specifically to the boxA antiterminator sequence of the ribosomal RNA (rrn) operons. This is Transcription antitermination protein NusB from Mycobacterium bovis (strain ATCC BAA-935 / AF2122/97).